We begin with the raw amino-acid sequence, 255 residues long: Probable membrane transporter protein HI_0198 (255 aa).

A run of 8 helical transmembrane segments spans residues 7 to 27 (LLAI…IAGG), 28 to 48 (GGLI…MALG), 76 to 96 (IWFI…LIQS), 99 to 119 (VAIF…YFLF), 132 to 152 (LSYL…DGFF), 153 to 173 (GPGT…FNLP), 191 to 211 (FALF…MMAG), and 235 to 255 (VVIM…WFHF).

This sequence belongs to the 4-toluene sulfonate uptake permease (TSUP) (TC 2.A.102) family.

It localises to the cell membrane. This Haemophilus influenzae (strain ATCC 51907 / DSM 11121 / KW20 / Rd) protein is Probable membrane transporter protein HI_0198.